Here is a 762-residue protein sequence, read N- to C-terminus: Probable inorganic carbon transporter subunit DabA (762 aa).

The Zn(2+) site is built by Cys279, Asp281, His461, and Cys476.

This sequence belongs to the inorganic carbon transporter (TC 9.A.2) DabA family. As to quaternary structure, forms a complex with DabB. It depends on Zn(2+) as a cofactor.

The protein localises to the cell inner membrane. Functionally, part of an energy-coupled inorganic carbon pump. The chain is Probable inorganic carbon transporter subunit DabA from Legionella pneumophila (strain Lens).